A 141-amino-acid polypeptide reads, in one-letter code: MSSEPGRVMALDVGERRIGVALSDPTRMLASPLTTIRAVPRSTALKRILTLIRDYQVTALVVGLPLTMNGDIGPQATLVQQFVDELRPLIDIPIFFVDERLTTVAAERMMIDLKIKPEQRRARIDEVAASIILQDFLDSQR.

It belongs to the YqgF nuclease family.

The protein localises to the cytoplasm. Its function is as follows. Could be a nuclease involved in processing of the 5'-end of pre-16S rRNA. This Roseiflexus sp. (strain RS-1) protein is Putative pre-16S rRNA nuclease.